The primary structure comprises 92 residues: Small ribosomal subunit protein bS18 (92 aa).

Positions 1-22 are disordered; that stretch reads MADERAPQRSTSGPRKKRPFQR.

This sequence belongs to the bacterial ribosomal protein bS18 family. As to quaternary structure, part of the 30S ribosomal subunit. Forms a tight heterodimer with protein bS6.

In terms of biological role, binds as a heterodimer with protein bS6 to the central domain of the 16S rRNA, where it helps stabilize the platform of the 30S subunit. This is Small ribosomal subunit protein bS18 from Citrifermentans bemidjiense (strain ATCC BAA-1014 / DSM 16622 / JCM 12645 / Bem) (Geobacter bemidjiensis).